A 268-amino-acid chain; its full sequence is Glucosamine-6-phosphate deaminase (268 aa).

Aspartate 67 acts as the Proton acceptor; for enolization step in catalysis. Asparagine 137 (for ring-opening step) is an active-site residue. The Proton acceptor; for ring-opening step role is filled by histidine 139. Glutamate 144 acts as the For ring-opening step in catalysis.

Belongs to the glucosamine/galactosamine-6-phosphate isomerase family. NagB subfamily. Homohexamer.

The enzyme catalyses alpha-D-glucosamine 6-phosphate + H2O = beta-D-fructose 6-phosphate + NH4(+). Its pathway is amino-sugar metabolism; N-acetylneuraminate degradation; D-fructose 6-phosphate from N-acetylneuraminate: step 5/5. Functionally, catalyzes the reversible isomerization-deamination of glucosamine 6-phosphate (GlcN6P) to form fructose 6-phosphate (Fru6P) and ammonium ion. This is Glucosamine-6-phosphate deaminase from Colwellia psychrerythraea (strain 34H / ATCC BAA-681) (Vibrio psychroerythus).